The primary structure comprises 445 residues: MSNFTKSSSFNRRALSSLAIESPRNSSSSVFTSPIGSAFASPRSQNFGGSPRPSTNRLKEISYLFQVLIIAGTIVSFLVIIAGGYLYVVPSLGQTFLGYNGALEFNSSVVGDTECDIFDGNWVVDDNYPLYNASECPFVEKGFNCLGNGRGHDEYLKWRWKPKHCTVPRFEVRDVLKRLRGKRIVFVGDSMSRTQWESLICMLMTGLEDKRSVYEVNGNNITKRIRFLGVRFSSYNFTVEFYRSVFLVQPGRLRWHAPKRVKSTLKLDVLDVINHEWSSADFLIFNTGQWWVPGKLFETGCYFQVGNSLRLGMSIPAAYRVALETWASWIESTVDPNKTRVLFRTFEPSHWSDHRSCNVTKYPAPDTEGRDKSIFSEMIKEVVKNMTIPVSILDVTSMSAFRSDGHVGLWSDNPLVPDCSHWCLPGVPDIWNEILLFFLFRQPVQ.

Residues 69–89 (IIAGTIVSFLVIIAGGYLYVV) traverse the membrane as a helical; Signal-anchor for type II membrane protein segment. A GDS motif motif is present at residues 188–190 (GDS). Residues 418 to 432 (DCSHWCLPGVPDIWN) carry the DCXHWCLPGXXDXWN motif motif.

Belongs to the PC-esterase family. TBL subfamily.

The protein localises to the membrane. Functionally, may act as a bridging protein that binds pectin and other cell wall polysaccharides. Probably involved in maintaining esterification of pectins. May be involved in the specific O-acetylation of cell wall polymers. This Arabidopsis thaliana (Mouse-ear cress) protein is Protein trichome berefringence-like 7 (TBL7).